A 957-amino-acid chain; its full sequence is Glycine dehydrogenase (decarboxylating) (957 aa).

Residue lysine 708 is modified to N6-(pyridoxal phosphate)lysine.

It belongs to the GcvP family. The glycine cleavage system is composed of four proteins: P, T, L and H. It depends on pyridoxal 5'-phosphate as a cofactor.

It catalyses the reaction N(6)-[(R)-lipoyl]-L-lysyl-[glycine-cleavage complex H protein] + glycine + H(+) = N(6)-[(R)-S(8)-aminomethyldihydrolipoyl]-L-lysyl-[glycine-cleavage complex H protein] + CO2. Functionally, the glycine cleavage system catalyzes the degradation of glycine. The P protein binds the alpha-amino group of glycine through its pyridoxal phosphate cofactor; CO(2) is released and the remaining methylamine moiety is then transferred to the lipoamide cofactor of the H protein. This chain is Glycine dehydrogenase (decarboxylating), found in Escherichia coli O8 (strain IAI1).